The primary structure comprises 434 residues: F-box/LRR-repeat protein 21 (434 aa).

In terms of domain architecture, F-box spans 39–85 (LLDWGNLPHHVVLRIFQYLPLIDRARASSVCRRWNEVFHIPDLWRKF). LRR repeat units lie at residues 187 to 213 (DTPV…KMSS), 214 to 239 (CPHV…ALNY), 242 to 265 (LSDK…RIDV), 322 to 347 (GRSV…VVCA), 349 to 374 (GIQV…GLSE), and 375 to 400 (CEVS…SIME).

In terms of assembly, part of the SCF (SKP1-CUL1-F-box) E3 ubiquitin-protein ligase complex SCF(FBXL21) composed of CUL1, SKP1, RBX1 and FBXL21. Interacts with CRY1 and CRY2.

It is found in the cytoplasm. Its subcellular location is the cytosol. The protein resides in the nucleus. It participates in protein modification; protein ubiquitination. Its function is as follows. Substrate-recognition component of the SCF(FBXL21) E3 ubiquitin ligase complex involved in circadian rhythm function. Plays a key role in the maintenance of both the speed and the robustness of the circadian clock oscillation. The SCF(FBXL21) complex mainly acts in the cytosol and mediates ubiquitination of CRY proteins (CRY1 and CRY2), leading to CRY proteins stabilization. The SCF(FBXL21) complex counteracts the activity of the SCF(FBXL3) complex and protects CRY proteins from degradation. Involved in the hypothalamic suprachiasmatic nucleus (SCN) clock regulating temporal organization of the daily activities. The chain is F-box/LRR-repeat protein 21 (FBXL21) from Bos taurus (Bovine).